We begin with the raw amino-acid sequence, 342 residues long: Ferredoxin--NADP reductase (342 aa).

FAD-binding residues include cysteine 17, aspartate 36, glutamine 44, tyrosine 49, valine 89, phenylalanine 124, aspartate 289, and threonine 330.

The protein belongs to the ferredoxin--NADP reductase type 2 family. Homodimer. It depends on FAD as a cofactor.

The enzyme catalyses 2 reduced [2Fe-2S]-[ferredoxin] + NADP(+) + H(+) = 2 oxidized [2Fe-2S]-[ferredoxin] + NADPH. This chain is Ferredoxin--NADP reductase, found in Bradyrhizobium sp. (strain BTAi1 / ATCC BAA-1182).